The chain runs to 407 residues: Lymphocyte transmembrane adapter 1 (407 aa).

The tract at residues 1–25 is disordered; the sequence is MYSTPAPPEVTRRNSEPSTRQGTLG. Over 1–33 the chain is Extracellular; sequence MYSTPAPPEVTRRNSEPSTRQGTLGSLQGEKGQ. Residues 16–25 show a composition bias toward polar residues; that stretch reads EPSTRQGTLG. Residues 34 to 54 form a helical; Signal-anchor for type III membrane protein membrane-spanning segment; that stretch reads IIFPGFVVLLTIILVIIAACI. Topologically, residues 55 to 407 are cytoplasmic; sequence LWSWKKQKKR…LATETSDEDA (353 aa). The tract at residues 109–131 is disordered; that stretch reads ESLLSRASDSPEPEAPQANGSLQ. Phosphotyrosine is present on residues Tyr185, Tyr260, Tyr286, and Tyr353. The interval 331–388 is disordered; sequence SAQSEDSAMVHREEQSSEDSSDYETVLVAELEGRDWKQGPGTQHPSDEGTPGDLAGKL.

When phosphorylated, interacts with GRB2, PIK3R1 and GRAP2. Phosphorylated on tyrosines upon TCR or BCR activation; which leads to the recruitment of GRB2, PIK3R1 and GRAP2. In terms of tissue distribution, expressed in T-cells and B-cells.

Its subcellular location is the cell membrane. Functionally, negatively regulates TCR (T-cell antigen receptor)-mediated signaling in T-cells and BCR (B-cell antigen receptor)-mediated signaling in B-cells. The polypeptide is Lymphocyte transmembrane adapter 1 (Lax1) (Mus musculus (Mouse)).